The primary structure comprises 1072 residues: MPKRLDINTILVIGSGPIVIGQAAEFDYSGTQACQSLREEGYKVILVNSNPATIMTDTATADKVYIEPLTLEFVSRIIRKERPDAILPTLGGQTGLNMAVELAKSGILEECGVEILGTKLSAIEQAEDRDLFRTLMQELNEPIPSSTIIHTLEEAHEFVKEIGYPVIVRPAFTMGGTGGGICSNEEELIEIVSGGLKHSPVTQCLLEKSIAGCKEIEYEVMRDSNDNAIVVCNMENIDPVGVHTGDSIVVAPSQTLSDREYQMLRNTSLRIIRALGIEGGCNVQLALDPHSFQYYVIEVNPRVSRSSALASKATGYPIAKLAAKIAVGLTLDEIINPVTQKTYACFEPALDYVVSKIPRWPFDKFESANRTLGTQMKATGEVMSIGRNLEQSLLKAVRSLELGVYHLELEHLKELDKETMKKRIIKADDERLFIVAEAIRQGVTKEEINEWCEMDFFFLQKVENIVNMEREVKANVGNMEVLQTAKEMGFSDHYVAAAWNKTEREIYDMRKESNITPVYKMVDTCAAEFESATPYYYSTYGDENESVRTDRKSVVVLGSGPIRIGQGVEFDYATVHSVWAIKEAGYEAIIVNNNPETVSTDFSISDKLYFEPLTIEDVMHIIDLEKPEGVIVQFGGQTAINLAAKLEEHGVKILGTSLEDLDRAEDRDKFEAALTQLGIPQPVGKTATTVEQAVAIAEEIGYPVLVRPSYVLGGRAMEIVYRQEELLHYMKNAVKVHAEHPVLIDRYMVGKEIEVDAISDGENVFIPGIMEHIERAGVHSGDSIGVYPPQSLSEKLKEQIIEHTIALGKGLNIVGLLNIQFVVFKDQVYVIEVNPRASRTVPFLSKITGVPMANVATKVILGQDLVEQGYGTGYHPEEKEVYVKAPVFSFAKLRSVDTTLGPEMKSTGEVMGKDLTLEKALYKGLVASGINIPTHGSVIITVADKDKEEAMEIAKRFHEIGYNLLATAGTAQSLAEQNIPVQVVNKIDSEDYNLLDIIRQGKAQFVINTLTKGKQPARDGFRIRRESVENGVACLTSLDTTRAILRVLESMTFSAHSMKEITQTKRHEVVHA.

A carboxyphosphate synthetic domain region spans residues 1–401; sequence MPKRLDINTI…SLLKAVRSLE (401 aa). Positions 129, 169, 175, 176, 208, 210, 215, 241, 242, 243, 284, and 298 each coordinate ATP. The region spanning 133–327 is the ATP-grasp 1 domain; the sequence is RTLMQELNEP…IAKLAAKIAV (195 aa). Positions 284, 298, and 300 each coordinate Mg(2+). Positions 284, 298, and 300 each coordinate Mn(2+). Residues 402–546 are oligomerization domain; sequence LGVYHLELEH…YSTYGDENES (145 aa). The tract at residues 547–929 is carbamoyl phosphate synthetic domain; that stretch reads VRTDRKSVVV…ALYKGLVASG (383 aa). The 191-residue stretch at 671-861 folds into the ATP-grasp 2 domain; that stretch reads EAALTQLGIP…MANVATKVIL (191 aa). ATP-binding residues include R707, R746, E752, G777, V778, H779, S780, Q820, and E832. Mg(2+) is bound by residues Q820, E832, and N834. Mn(2+) contacts are provided by Q820, E832, and N834. Residues 930 to 1072 enclose the MGS-like domain; that stretch reads INIPTHGSVI…QTKRHEVVHA (143 aa). The segment at 930 to 1072 is allosteric domain; that stretch reads INIPTHGSVI…QTKRHEVVHA (143 aa).

This sequence belongs to the CarB family. As to quaternary structure, composed of two chains; the small (or glutamine) chain promotes the hydrolysis of glutamine to ammonia, which is used by the large (or ammonia) chain to synthesize carbamoyl phosphate. Tetramer of heterodimers (alpha,beta)4. Mg(2+) is required as a cofactor. Requires Mn(2+) as cofactor.

It catalyses the reaction hydrogencarbonate + L-glutamine + 2 ATP + H2O = carbamoyl phosphate + L-glutamate + 2 ADP + phosphate + 2 H(+). The catalysed reaction is hydrogencarbonate + NH4(+) + 2 ATP = carbamoyl phosphate + 2 ADP + phosphate + 2 H(+). Its pathway is amino-acid biosynthesis; L-arginine biosynthesis; carbamoyl phosphate from bicarbonate: step 1/1. The protein operates within pyrimidine metabolism; UMP biosynthesis via de novo pathway; (S)-dihydroorotate from bicarbonate: step 1/3. In terms of biological role, large subunit of the glutamine-dependent carbamoyl phosphate synthetase (CPSase). CPSase catalyzes the formation of carbamoyl phosphate from the ammonia moiety of glutamine, carbonate, and phosphate donated by ATP, constituting the first step of 2 biosynthetic pathways, one leading to arginine and/or urea and the other to pyrimidine nucleotides. The large subunit (synthetase) binds the substrates ammonia (free or transferred from glutamine from the small subunit), hydrogencarbonate and ATP and carries out an ATP-coupled ligase reaction, activating hydrogencarbonate by forming carboxy phosphate which reacts with ammonia to form carbamoyl phosphate. The chain is Carbamoyl phosphate synthase large chain from Bacillus cereus (strain G9842).